Consider the following 295-residue polypeptide: Protoheme IX farnesyltransferase 2 (295 aa).

9 helical membrane passes run 9-29 (ITKP…FFLA), 36-56 (LAVF…GCVF), 80-100 (LISL…GVAL), 108-128 (LAAL…SLYL), 135-155 (GTLV…VAVT), 163-183 (LTLL…IAIF), 209-229 (ILIY…SGYA), 230-250 (GMSY…MAWT), and 265-285 (FVFS…DFKV).

Belongs to the UbiA prenyltransferase family. Protoheme IX farnesyltransferase subfamily.

Its subcellular location is the cell inner membrane. The catalysed reaction is heme b + (2E,6E)-farnesyl diphosphate + H2O = Fe(II)-heme o + diphosphate. It functions in the pathway porphyrin-containing compound metabolism; heme O biosynthesis; heme O from protoheme: step 1/1. Functionally, converts heme B (protoheme IX) to heme O by substitution of the vinyl group on carbon 2 of heme B porphyrin ring with a hydroxyethyl farnesyl side group. The chain is Protoheme IX farnesyltransferase 2 from Pseudomonas fluorescens (strain Pf0-1).